A 1710-amino-acid polypeptide reads, in one-letter code: Neurexin-2 (1710 aa).

Positions 1 to 28 are cleaved as a signal peptide; it reads MALGSRWQPPPQLPPLLLLLALAAGVRG. Positions 29–206 constitute a Laminin G-like 1 domain; the sequence is LEFGGGPGQW…LRGAAADPLC (178 aa). Residues 29–1634 lie on the Extracellular side of the membrane; the sequence is LEFGGGPGQW…EVIRESSSTT (1606 aa). An N-linked (GlcNAc...) asparagine glycan is attached at Asn-60. The EGF-like 1 domain maps to 202 to 242; it reads ADPLCAPARNPCANGGLCTVLAPGEVGCDCSHTGFGGKFCS. Intrachain disulfides connect Cys-206/Cys-219, Cys-213/Cys-229, and Cys-231/Cys-241. Laminin G-like domains lie at 289 to 486 and 493 to 686; these read VATF…SFRC and DPVT…APFC. A Ca(2+)-binding site is contributed by Asp-335. Asn-338 is a glycosylation site (N-linked (GlcNAc...) asparagine). Ca(2+)-binding residues include Leu-352 and Met-420. Cystine bridges form between Cys-450–Cys-486, Cys-657–Cys-686, Cys-694–Cys-705, Cys-699–Cys-714, and Cys-716–Cys-726. The EGF-like 2 domain occupies 690–727; the sequence is TLKQCASAPCRNGGICREGWNRFVCDCIGTGFLGRVCE. Laminin G-like domains lie at 732–904 and 918–1093; these read VLSY…ITYC and DPVT…ERGC. Positions 779 and 796 each coordinate Ca(2+). Asn-841 carries N-linked (GlcNAc...) asparagine glycosylation. Arg-854 serves as a coordination point for Ca(2+). Disulfide bonds link Cys-1065-Cys-1093, Cys-1100-Cys-1111, Cys-1105-Cys-1120, and Cys-1122-Cys-1132. Residues 1096 to 1133 form the EGF-like 3 domain; the sequence is PSTTCTEESCANQGVCLQQWDGFTCDCTMTSYGGPVCN. The Laminin G-like 6 domain maps to 1137-1345; it reads TTYIFGKGGA…HLRLVGEGPS (209 aa). Ca(2+)-binding residues include Asp-1189, Val-1206, Ile-1288, and Asn-1290. Ser-1400 carries an O-linked (Xyl...) (heparan sulfate) serine glycan. Disordered stretches follow at residues 1458-1508 and 1587-1621; these read ATQD…LPPT and EPRR…RGPP. The helical transmembrane segment at 1635–1655 threads the bilayer; it reads GMVVGIVAAAALCILILLYAM. Topologically, residues 1656–1710 are cytoplasmic; the sequence is YKYRNRDEGSYQVDQSRNYISNSAQSNGAVVKEKAPAAPKTPSKAKKNKDKEYYV. The tract at residues 1677–1710 is disordered; it reads NSAQSNGAVVKEKAPAAPKTPSKAKKNKDKEYYV.

The laminin G-like domain 1 binds to NXPH1. Interacts with PATJ. Interacts with CBLN1, CBLN2 and, less avidly, with CBLN4. Specific isoforms bind neuroligins NLGN1, NLGN2 and NLGN3. Specific isoforms bind to alpha-dystroglycan. Interacts (via Laminin G-like 1 domain) with IGSF21 (Ig-like 1 domain) in a trans-interaction manner. Interacts with CLSTN3. Post-translationally, O-glycosylated; contains heparan sulfate. Heparan sulfate attachment is required for synapse development by mediating interactions with neuroligins.

The protein resides in the presynaptic cell membrane. Neuronal cell surface protein that may be involved in cell recognition and cell adhesion. May mediate intracellular signaling. This Mus musculus (Mouse) protein is Neurexin-2.